Here is a 378-residue protein sequence, read N- to C-terminus: uncharacterized protein (378 aa).

In terms of domain architecture, Guanylate cyclase spans 208 to 317; sequence GIGFADLSSF…NPVNLAARLV (110 aa).

This sequence belongs to the adenylyl cyclase class-4/guanylyl cyclase family.

This is an uncharacterized protein from Mycobacterium bovis (strain ATCC BAA-935 / AF2122/97).